The sequence spans 2488 residues: PKS-NRPS hybrid synthetase swnK (2488 aa).

The adenylation (A) domain stretch occupies residues 33-422 (FEQVADRFPD…GRIDGVVKIR (390 aa)). The region spanning 523-598 (QPTSELEQRI…ALAAYLAGTG (76 aa)) is the Carrier 1 domain. Position 558 is an O-(pantetheine 4'-phosphoryl)serine (serine 558). The 424-residue stretch at 616–1039 (HEDIAIVSMA…GTNAHVIVEE (424 aa)) folds into the Ketosynthase family 3 (KS3) domain. Residues cysteine 785, histidine 920, and histidine 960 each act as for beta-ketoacyl synthase activity in the active site. Residues 1149-1471 (LFTGQGSQLP…SLSELHVRHV (323 aa)) are malonyl-CoA:ACP transacylase (MAT) domain. Residues 1723–1901 (GAVLVTGGLG…ASSVAYGTWA (179 aa)) form a ketoreductase (KR) domain region. Positions 2002–2077 (SIVLHMVQAT…SLSEFLLCRL (76 aa)) constitute a Carrier 2 domain. The residue at position 2037 (serine 2037) is an O-(pantetheine 4'-phosphoryl)serine. The disordered stretch occupies residues 2084-2103 (STSSPSDTDGATPSTPTSAA). The interval 2136 to 2364 (VTGATGFVGT…VLPVDYLCGT (229 aa)) is thioester reductase (TE) domain.

It in the N-terminal section; belongs to the NRP synthetase family.

It carries out the reaction L-pipecolate + malonyl-CoA + 2 NADPH + 4 H(+) = (8aS)-octahydroindolizin-1-one + CO2 + 2 NADP(+) + CoA + 2 H2O. It catalyses the reaction L-pipecolate + malonyl-CoA + 3 NADPH + 5 H(+) = (1R,8aS)-octahydroindolizin-1-ol + CO2 + 3 NADP(+) + CoA + 2 H2O. The enzyme catalyses L-pipecolate + malonyl-CoA + 3 NADPH + 5 H(+) = (1S,8aS)-octahydroindolizin-1-ol + CO2 + 3 NADP(+) + CoA + 2 H2O. It participates in mycotoxin biosynthesis. PKS-NRPS hybrid synthetase; part of the gene cluster that mediates the biosynthesis of swainsonine (SW), a cytotoxic fungal alkaloid and a potential cancer therapy drug. Swainsonine production occurs via a multibranched pathway and is dispensable for fungal colonization of plants and infection of insect hosts. The first step of swainsonine biosynthesis is the production of the precursor pipecolic acid (PA) via conversion of L-lysine (Lys) to 1-piperideine-6-carboxylate (P6C) by the aminotransferase swnA, the latter being further reduced to PA by the reductase swnR. PA can be converted from lysine by both the SW biosynthetic cluster and the unclustered genes such as lysine cyclodeaminase. The PKS-NRPS hybrid synthetase swnK uptakes and condensates PA and malonyl-CoA with and without skipping of the ketoreductase (KR) domain in order to produce 3 intermediates, 1-oxoindolizidine, (1S)-1-hydroxyindolizin, and (1R)-1-hydroxyindolizine; with the transisomer (1S)-1-hydroxyindolizin being predominant. The terminal thioester reductase (TE) domain of swnK is involved in reduction of the thioester bond to release the intermediate aldehydes. The oxidoreductase swnN could contribute to the reduction of 1-oxoindolizidine to (1S)-1-hydroxyindolizin and (1R)-1-hydroxyindolizine, contributing to the major route of SW production. The dioxygenase swnH2 would be responsible for the oxidization of (1R)-1-hydroxyindolizine into (1R,2S)-1,2-dihydroxyindolizine and of (1S)-1-hydroxyindolizin to yield both (1R,2S)-1,2-dihydroxyindolizine and (1S,2S)-1,2-dihydroxyindolizine. The dioxygenase swnH1 then performs the conversion of the 1,2-dihydroxyindolizine epimers to SW. The polypeptide is PKS-NRPS hybrid synthetase swnK (Metarhizium robertsii (strain ARSEF 23 / ATCC MYA-3075) (Metarhizium anisopliae (strain ARSEF 23))).